A 140-amino-acid polypeptide reads, in one-letter code: UPF0654 protein C22G7.11c (140 aa).

Disordered stretches follow at residues Met-1–Lys-88 and Tyr-110–Ala-140. Residues Ala-24–Glu-33 show a composition bias toward basic and acidic residues. Positions Ser-34–Tyr-44 are enriched in polar residues. The span at Asp-54 to Glu-71 shows a compositional bias: acidic residues.

This sequence belongs to the UPF0654 (con-6) family.

This chain is UPF0654 protein C22G7.11c, found in Schizosaccharomyces pombe (strain 972 / ATCC 24843) (Fission yeast).